The sequence spans 329 residues: MQGSVTEFLKPRLVDIEQVNSTRAKVTLEPLERGFGHTLGNALRRILLSSMPGCAVTEVEIDGVLHEYSSKEGVQEDILEILLNLKGLAVTIEGKDEAMLTLSKSGAGPVIAADITHDGDVTIVNPDHVICHLTGNNDISMRIRVERGRGYVPASARAQTEDDDRPIGRLLVDASFSPVARIAYNVEAARVEQRTDLDKLVIDMTTNGTIDPEEAIRRSATILAEQLDAFVELRDVTEPEMKEEKPEFDPILLRPVDDLELTVRSANCLKAEAIHYIGDLVQRTEVELLKTPNLGKKSLTEIKDVLASRGLSLGMRLENWPPASLADDL.

Residues 1–234 are alpha N-terminal domain (alpha-NTD); the sequence is MQGSVTEFLK…EQLDAFVELR (234 aa). An alpha C-terminal domain (alpha-CTD) region spans residues 248-329; that stretch reads FDPILLRPVD…WPPASLADDL (82 aa).

This sequence belongs to the RNA polymerase alpha chain family. As to quaternary structure, homodimer. The RNAP catalytic core consists of 2 alpha, 1 beta, 1 beta' and 1 omega subunit. When a sigma factor is associated with the core the holoenzyme is formed, which can initiate transcription.

The catalysed reaction is RNA(n) + a ribonucleoside 5'-triphosphate = RNA(n+1) + diphosphate. Its function is as follows. DNA-dependent RNA polymerase catalyzes the transcription of DNA into RNA using the four ribonucleoside triphosphates as substrates. The sequence is that of DNA-directed RNA polymerase subunit alpha from Shewanella sp. (strain ANA-3).